Reading from the N-terminus, the 284-residue chain is Aliphatic sulfonates import ATP-binding protein SsuB (284 aa).

Residues Leu-21–Leu-242 enclose the ABC transporter domain. Gly-53–Ser-60 provides a ligand contact to ATP.

This sequence belongs to the ABC transporter superfamily. Aliphatic sulfonates importer (TC 3.A.1.17.2) family. The complex is composed of two ATP-binding proteins (SsuB), two transmembrane proteins (SsuC) and a solute-binding protein (SsuA).

It localises to the cell inner membrane. The catalysed reaction is ATP + H2O + aliphatic sulfonate-[sulfonate-binding protein]Side 1 = ADP + phosphate + aliphatic sulfonateSide 2 + [sulfonate-binding protein]Side 1.. Functionally, part of the ABC transporter complex SsuABC involved in aliphatic sulfonates import. Responsible for energy coupling to the transport system. The sequence is that of Aliphatic sulfonates import ATP-binding protein SsuB from Ralstonia nicotianae (strain ATCC BAA-1114 / GMI1000) (Ralstonia solanacearum).